Here is a 450-residue protein sequence, read N- to C-terminus: Keratin, type I cytoskeletal 25 (450 aa).

The interval Met1 to Ser24 is disordered. The interval Met1–Asn78 is head. The segment at Glu79–Trp114 is coil 1A. Residues Glu79 to Cys394 form the IF rod domain. Residues Tyr115–Ile136 are linker 1. Positions Ile137–Leu228 are coil 1B. Residues Gln229–Leu251 are linker 12. Residues Leu252–Asp390 are coil 2. Residues Asp391–Asn450 form a tail region. At Ser442 the chain carries Phosphoserine.

This sequence belongs to the intermediate filament family. In terms of assembly, heterodimer of a type I and a type II keratin. Heterodimer with type II keratin KRT5 leading to the formation of keratin intermediate filament (KIF) network. Interacts with KRT6A to form filaments. In terms of tissue distribution, expressed in skin and wool follicle. Expression localized to the inner root sheath of wool follicle.

The protein resides in the cytoplasm. Essential for the proper assembly of type I and type II keratin protein complexes and formation of keratin intermediate filaments in the inner root sheath (irs). Plays a role in the cytoskeleton organization. This is Keratin, type I cytoskeletal 25 from Ovis aries (Sheep).